Reading from the N-terminus, the 303-residue chain is Mycothiol acetyltransferase (303 aa).

N-acetyltransferase domains are found at residues 10 to 156 (ALPG…LAVP) and 162 to 303 (LAVR…SGPR). 1D-myo-inositol 2-(L-cysteinylamino)-2-deoxy-alpha-D-glucopyranoside is bound at residue Glu41. 86-88 (LLV) lines the acetyl-CoA pocket. The 1D-myo-inositol 2-(L-cysteinylamino)-2-deoxy-alpha-D-glucopyranoside site is built by Glu189, Lys228, and Glu235. Residues 239–241 (LGV) and 246–252 (SGAGLGR) contribute to the acetyl-CoA site. Tyr272 is a binding site for 1D-myo-inositol 2-(L-cysteinylamino)-2-deoxy-alpha-D-glucopyranoside. 277-282 (NLRAVR) contacts acetyl-CoA.

It belongs to the acetyltransferase family. MshD subfamily. As to quaternary structure, monomer.

The enzyme catalyses 1D-myo-inositol 2-(L-cysteinylamino)-2-deoxy-alpha-D-glucopyranoside + acetyl-CoA = mycothiol + CoA + H(+). Functionally, catalyzes the transfer of acetyl from acetyl-CoA to desacetylmycothiol (Cys-GlcN-Ins) to form mycothiol. This chain is Mycothiol acetyltransferase, found in Kineococcus radiotolerans (strain ATCC BAA-149 / DSM 14245 / SRS30216).